The chain runs to 278 residues: Chitosanase (278 aa).

A signal peptide spans Met-1–Lys-40. Catalysis depends on Glu-62, which acts as the Proton donor. The active-site Nucleophile is the Asp-80.

Belongs to the glycosyl hydrolase 46 family.

It is found in the secreted. It catalyses the reaction Endohydrolysis of beta-(1-&gt;4)-linkages between D-glucosamine residues in a partly acetylated chitosan.. Functionally, aids in the defense against invading fungal pathogens by degrading their cell wall chitosan. The polypeptide is Chitosanase (csn) (Streptomyces sp. (strain N174)).